We begin with the raw amino-acid sequence, 373 residues long: MNKKVALITGITGQDGSYLAEFLLEKGYEVHGIKRRSSLFNTQRVDHLYKDPHEEDVNFKLHYGDLTDSSNLTRILAEVQPDEVYNLGAQSHVAVSFQSPEYTADVDAIGTLRLLEAIRFLGLTKKTKFYQASTSELYGLVQEIPQKETTPFYPRSPYAVAKMYAYWITINYRESYGIYACNGILFNHESPRRGETFVTRKITRGMANIAQGLEKCLFMGNLDALRDWGHAKDYVKMQWMMLQQDEPRDFVIATGVQYSVREFIDMSARELGIELEFVGKGVDEKAVVKSVIGTKAPAIKVGDIIVAVDPAYFRPAEVETLLGDPSLAKKELGWVPEITLQQMVSEMVASDLEQAQSHALLKKHGYNVNVSVE.

NADP(+) is bound by residues 10 to 15, 65 to 66, 87 to 91, and tyrosine 102; these read GITGQD, DL, and LGAQS. Residue threonine 134 is part of the active site. Residues glutamate 136 and tyrosine 158 each act as nucleophile in the active site. NADP(+) is bound by residues lysine 162, histidine 188, and arginine 193.

This sequence belongs to the NAD(P)-dependent epimerase/dehydratase family. GDP-mannose 4,6-dehydratase subfamily. The cofactor is NADP(+).

The catalysed reaction is GDP-alpha-D-mannose = GDP-4-dehydro-alpha-D-rhamnose + H2O. Catalyzes the conversion of GDP-D-mannose to GDP-4-dehydro-6-deoxy-D-mannose. The chain is GDP-mannose 4,6-dehydratase from Vibrio cholerae serotype O1 (strain ATCC 39315 / El Tor Inaba N16961).